We begin with the raw amino-acid sequence, 452 residues long: Mitochondrial import inner membrane translocase subunit TIM44 (452 aa).

The residue at position 128 (threonine 128) is a Phosphothreonine. 166-173 (SGEKLGKT) serves as a coordination point for ATP. N6-succinyllysine is present on lysine 177. Phosphoserine is present on serine 180. Residue lysine 217 is modified to N6-succinyllysine.

The protein belongs to the Tim44 family. As to quaternary structure, probable component of the PAM complex at least composed of a mitochondrial HSP70 protein, GRPEL1 or GRPEL2, TIMM44, TIMM16/PAM16 and TIMM14/DNAJC19. The complex interacts with the TIMM23 component of the TIM23 complex. Interacts with SLC25A4/ANT1 and SLC25A5/ANT2; leading to inhibit the presequence translocase TIMM23, thereby promoting stabilization of PINK1.

It localises to the mitochondrion inner membrane. Functionally, essential component of the PAM complex, a complex required for the translocation of transit peptide-containing proteins from the inner membrane into the mitochondrial matrix in an ATP-dependent manner. Recruits mitochondrial HSP70 to drive protein translocation into the matrix using ATP as an energy source. The protein is Mitochondrial import inner membrane translocase subunit TIM44 (Timm44) of Mus musculus (Mouse).